We begin with the raw amino-acid sequence, 367 residues long: Heme A synthase 2 (367 aa).

5 helical membrane passes run 28–48 (MVAI…GIGA), 114–134 (MWGR…LWTG), 143–163 (WLVT…WMVA), 180–200 (VHYC…LTVL), and 221–241 (MAMG…FLSG). Heme is bound at residue His-284. A run of 3 helical transmembrane segments spans residues 286–306 (LLGT…IRAD), 314–334 (AFLV…TTLV), and 340–360 (IGIV…WAWF). A heme-binding site is contributed by His-344.

Belongs to the COX15/CtaA family. Type 2 subfamily. Interacts with CtaB. Requires heme b as cofactor.

The protein localises to the cell membrane. It carries out the reaction Fe(II)-heme o + 2 A + H2O = Fe(II)-heme a + 2 AH2. Its pathway is porphyrin-containing compound metabolism; heme A biosynthesis; heme A from heme O: step 1/1. Its function is as follows. Catalyzes the conversion of heme O to heme A by two successive hydroxylations of the methyl group at C8. The first hydroxylation forms heme I, the second hydroxylation results in an unstable dihydroxymethyl group, which spontaneously dehydrates, resulting in the formyl group of heme A. The chain is Heme A synthase 2 from Acidiphilium cryptum (strain JF-5).